Here is a 400-residue protein sequence, read N- to C-terminus: Golgin-45 (400 aa).

Polar residues predominate over residues 1-16 (MTTKNLETKVTVTSSP). The segment at 1 to 58 (MTTKNLETKVTVTSSPIRGAGDGMETEEPPKSVEVTSGVQSRKHHSLQSPWKKAVPSE) is disordered. Ser15 carries the phosphoserine modification. The Tankyrase-binding motif motif lies at 18 to 22 (RGAGD). Ser49 bears the Phosphoserine mark. Residues 120–213 (NKELSEVKNV…QLERMSIQCD (94 aa)) are a coiled coil. At Thr348 the chain carries Phosphothreonine. Ser353 carries the post-translational modification Phosphoserine. Residues 394–400 (RGELIAL) are essential for interaction with GORASP2.

As to quaternary structure, interacts with GORASP2. Interacts with the GTP-bound form of RAB2, but not with other Golgi Rab proteins. Identified in a complex with RAB2 and GORASP2. ADP-ribosylated by tankyrase TNKS and TNKS2. Poly-ADP-ribosylated protein is recognized by RNF146, followed by ubiquitination. In terms of processing, ubiquitinated by RNF146 when poly-ADP-ribosylated, leading to its degradation. Detected in adrenal gland.

The protein resides in the golgi apparatus membrane. It localises to the nucleus. It is found in the cytoplasm. Its function is as follows. Required for normal Golgi structure and for protein transport from the endoplasmic reticulum (ER) through the Golgi apparatus to the cell surface. The sequence is that of Golgin-45 (BLZF1) from Homo sapiens (Human).